The sequence spans 114 residues: MFTVKLLAFMVVAVSLQHLAEATPKVCAGCPVEVDPNREDIKKSLAHVMAAKNSPDELVRIIKASTQVVNGIKYKVVFEVKNPSTNQVKICKTAYVSRPWEYEGYNVLEFGCKA.

Residues 1 to 22 form the signal peptide; the sequence is MFTVKLLAFMVVAVSLQHLAEA. One can recognise a Cystatin domain in the interval 29–83; sequence GCPVEVDPNREDIKKSLAHVMAAKNSPDELVRIIKASTQVVNGIKYKVVFEVKNP.

The protein belongs to the cystatin family. Expressed by the venom gland (anterior main gland) (at protein level).

The protein resides in the secreted. The protein is Cystatin Pr15a of Platymeris rhadamanthus (Red spot assassin bug).